The sequence spans 315 residues: tRNA pseudouridine synthase B (315 aa).

The Nucleophile role is filled by aspartate 47.

The protein belongs to the pseudouridine synthase TruB family. Type 1 subfamily.

It catalyses the reaction uridine(55) in tRNA = pseudouridine(55) in tRNA. Its function is as follows. Responsible for synthesis of pseudouridine from uracil-55 in the psi GC loop of transfer RNAs. The chain is tRNA pseudouridine synthase B from Shewanella amazonensis (strain ATCC BAA-1098 / SB2B).